Consider the following 260-residue polypeptide: 3'-5' ssDNA/RNA exonuclease TatD (260 aa).

Residues Glu91, His127, and His152 each contribute to the a divalent metal cation site.

It belongs to the metallo-dependent hydrolases superfamily. TatD-type hydrolase family. TatD subfamily. As to quaternary structure, monomer. The cofactor is Mg(2+).

Its subcellular location is the cytoplasm. 3'-5' exonuclease that prefers single-stranded DNA and RNA. May play a role in the H(2)O(2)-induced DNA damage repair. This chain is 3'-5' ssDNA/RNA exonuclease TatD, found in Salmonella typhimurium (strain LT2 / SGSC1412 / ATCC 700720).